Reading from the N-terminus, the 729-residue chain is Putative cyclic nucleotide-gated ion channel 19 (729 aa).

Residues 1 to 172 are Cytoplasmic-facing; it reads MAHTRTFTSR…SKFVQVWTRV (172 aa). A disordered region spans residues 52-82; that stretch reads SGPIHSTRRTEPLFSPSPQESPDSSSTVDVP. Residues 67-81 show a composition bias toward low complexity; the sequence is PSPQESPDSSSTVDV. Residues 173–193 traverse the membrane as a helical segment; sequence LAFSSLVAIFIDPLFFFLLLI. Residues 194-208 are Extracellular-facing; the sequence is QQDNKCIAIDWRATK. The chain crosses the membrane as a helical span at residues 209 to 229; that stretch reads VLVSLRSITDLIFFINILLQF. Over 230-261 the chain is Cytoplasmic; it reads RLAYVAPESRIVGAGQLVDHPRKIARHYFRGK. The helical transmembrane segment at 262–282 threads the bilayer; that stretch reads FLLDMFIVFPIPQIMILRIIP. Residues 283–295 lie on the Extracellular side of the membrane; sequence LHLGTRREESEKQ. Residues 296 to 316 traverse the membrane as a helical segment; it reads ILRATVLFQYIPKLYRLLPLL. Residues 317–332 lie on the Cytoplasmic side of the membrane; it reads AGQTSTGFIFESAWAN. The helical transmembrane segment at 333–353 threads the bilayer; it reads FVINLLTFMLAGHAVGSCWYL. The Extracellular portion of the chain corresponds to 354-451; sequence SALQRVKKCM…STLAGNLSPS (98 aa). Residues 452-472 form a helical membrane-spanning segment; sequence YSVGEVFFTMGIIGLGLLLFA. Residues 473-729 lie on the Cytoplasmic side of the membrane; that stretch reads RLIGNMHNFL…LNTAHSNSNR (257 aa). A nucleoside 3',5'-cyclic phosphate contacts are provided by residues 560 to 677 and glutamate 625; that span reads IFSL…VTSL. Residues 678–694 form a calmodulin-binding region; that stretch reads FSRFLRSHRVQGAIRYE. The IQ domain occupies 699–728; that stretch reads RLRAAMQIQVAWRYRKRQLQRLNTAHSNSN.

Belongs to the cyclic nucleotide-gated cation channel (TC 1.A.1.5) family. In terms of assembly, homotetramer or heterotetramer.

Its subcellular location is the cell membrane. Its function is as follows. Putative cyclic nucleotide-gated ion channel. This Arabidopsis thaliana (Mouse-ear cress) protein is Putative cyclic nucleotide-gated ion channel 19 (CNGC19).